Consider the following 294-residue polypeptide: 4-hydroxy-tetrahydrodipicolinate synthase (294 aa).

Threonine 45 is a binding site for pyruvate. Catalysis depends on tyrosine 133, which acts as the Proton donor/acceptor. Lysine 162 (schiff-base intermediate with substrate) is an active-site residue. Residue isoleucine 204 participates in pyruvate binding.

This sequence belongs to the DapA family. As to quaternary structure, homotetramer; dimer of dimers.

It localises to the cytoplasm. It carries out the reaction L-aspartate 4-semialdehyde + pyruvate = (2S,4S)-4-hydroxy-2,3,4,5-tetrahydrodipicolinate + H2O + H(+). Its pathway is amino-acid biosynthesis; L-lysine biosynthesis via DAP pathway; (S)-tetrahydrodipicolinate from L-aspartate: step 3/4. Functionally, catalyzes the condensation of (S)-aspartate-beta-semialdehyde [(S)-ASA] and pyruvate to 4-hydroxy-tetrahydrodipicolinate (HTPA). The polypeptide is 4-hydroxy-tetrahydrodipicolinate synthase (Bartonella tribocorum (strain CIP 105476 / IBS 506)).